The chain runs to 128 residues: Glycine cleavage system H protein (128 aa).

Residues 24-106 form the Lipoyl-binding domain; it reads LVRIGISEFA…HGEGWLLIIR (83 aa). An N6-lipoyllysine modification is found at Lys-65.

It belongs to the GcvH family. The glycine cleavage system is composed of four proteins: P, T, L and H. (R)-lipoate serves as cofactor.

The glycine cleavage system catalyzes the degradation of glycine. The H protein shuttles the methylamine group of glycine from the P protein to the T protein. The sequence is that of Glycine cleavage system H protein from Prochlorococcus marinus (strain NATL2A).